We begin with the raw amino-acid sequence, 359 residues long: Dihydroorotate dehydrogenase (quinone) (359 aa).

FMN contacts are provided by residues 68-72 (AGFDK) and threonine 92. Lysine 72 lines the substrate pocket. A substrate-binding site is contributed by 117–121 (NRMGF). 2 residues coordinate FMN: asparagine 145 and asparagine 176. Asparagine 176 contacts substrate. The active-site Nucleophile is the serine 179. Asparagine 181 lines the substrate pocket. Positions 212 and 240 each coordinate FMN. Substrate is bound at residue 241 to 242 (NT). Residues glycine 266, glycine 295, and 316 to 317 (YT) each bind FMN.

This sequence belongs to the dihydroorotate dehydrogenase family. Type 2 subfamily. As to quaternary structure, monomer. FMN is required as a cofactor.

It is found in the cell membrane. It catalyses the reaction (S)-dihydroorotate + a quinone = orotate + a quinol. It participates in pyrimidine metabolism; UMP biosynthesis via de novo pathway; orotate from (S)-dihydroorotate (quinone route): step 1/1. In terms of biological role, catalyzes the conversion of dihydroorotate to orotate with quinone as electron acceptor. In Corynebacterium striatum, this protein is Dihydroorotate dehydrogenase (quinone).